The primary structure comprises 416 residues: Serine hydroxymethyltransferase (416 aa).

(6S)-5,6,7,8-tetrahydrofolate-binding positions include Leu-121 and 125–127 (GHL). At Lys-229 the chain carries N6-(pyridoxal phosphate)lysine.

It belongs to the SHMT family. As to quaternary structure, homodimer. Pyridoxal 5'-phosphate serves as cofactor.

It is found in the cytoplasm. The catalysed reaction is (6R)-5,10-methylene-5,6,7,8-tetrahydrofolate + glycine + H2O = (6S)-5,6,7,8-tetrahydrofolate + L-serine. The protein operates within one-carbon metabolism; tetrahydrofolate interconversion. Its pathway is amino-acid biosynthesis; glycine biosynthesis; glycine from L-serine: step 1/1. Catalyzes the reversible interconversion of serine and glycine with tetrahydrofolate (THF) serving as the one-carbon carrier. This reaction serves as the major source of one-carbon groups required for the biosynthesis of purines, thymidylate, methionine, and other important biomolecules. Also exhibits THF-independent aldolase activity toward beta-hydroxyamino acids, producing glycine and aldehydes, via a retro-aldol mechanism. This chain is Serine hydroxymethyltransferase, found in Neisseria meningitidis serogroup B (strain ATCC BAA-335 / MC58).